The following is a 531-amino-acid chain: Ceramide kinase (531 aa).

The interval 1-115 (MGAMGAAEPL…SADEQLCHLW (115 aa)) is essential for enzyme activity. The segment at 1–125 (MGAMGAAEPL…LQTLRGLLES (125 aa)) is required for binding to sulfatide and phosphoinositides. Positions 128 to 278 (SRPKHLLVFI…IDVSSVHYHN (151 aa)) constitute a DAGKc domain. ATP is bound by residues 138–140 (NPF) and 170–174 (TEHAN). Residue 195–198 (GGDG) coordinates substrate. Catalysis depends on Asp197, which acts as the Proton donor/acceptor. Residues Glu202, 239–241 (GST), Arg304, and Arg310 contribute to the ATP site. 2 positions are modified to phosphoserine: Ser340 and Ser408. 502–504 (DGE) serves as a coordination point for ATP.

Ca(2+) serves as cofactor. Requires Mg(2+) as cofactor. As to expression, high level expression in heart, brain, testis and pancreas; low expression in spleen, liver and lung; not detected in skeletal muscle.

It localises to the cytoplasm. The protein localises to the cell membrane. The catalysed reaction is an N-acylsphing-4-enine + ATP = an N-acylsphing-4-enine 1-phosphate + ADP + H(+). The enzyme catalyses N-(hexanoyl)sphing-4-enine + ATP = N-hexanoylsphing-4-enine 1-phosphate + ADP + H(+). It carries out the reaction N-(acetyl)-sphing-4-enine + ATP = N-(acetyl)-sphing-4-enine-1-phosphate + ADP + H(+). It catalyses the reaction N-hexadecanoylsphing-4-enine + ATP = N-(hexadecanoyl)-sphing-4-enine-1-phosphate + ADP + H(+). The catalysed reaction is N-hexanoyl-(4R)-hydroxysphinganine + ATP = N-hexanoyl-(4R)-hydroxysphinganine-1-phosphate + ADP + H(+). In terms of biological role, catalyzes specifically the phosphorylation of ceramide to form ceramide 1-phosphate. Acts efficiently on natural and analog ceramides (C6, C8, C16 ceramides, and C8-dihydroceramide), to a lesser extent on C2-ceramide and C6-dihydroceramide, but not on other lipids, such as various sphingosines. Shows a greater preference for D-erythro isomer of ceramides. Binds phosphoinositides. The protein is Ceramide kinase (Cerk) of Mus musculus (Mouse).